Here is a 433-residue protein sequence, read N- to C-terminus: Serine/threonine-protein kinase KDX1 (433 aa).

Residues 23–318 enclose the Protein kinase domain; the sequence is FHLTGKIGRG…VEDALEHPYL (296 aa). Residues 29-37 and lysine 55 contribute to the ATP site; that span reads IGRGSHSLI. Catalysis depends on aspartate 153, which acts as the Proton acceptor.

Belongs to the protein kinase superfamily. Ser/Thr protein kinase family. Interacts with RLM1.

The catalysed reaction is L-seryl-[protein] + ATP = O-phospho-L-seryl-[protein] + ADP + H(+). It catalyses the reaction L-threonyl-[protein] + ATP = O-phospho-L-threonyl-[protein] + ADP + H(+). Serine/threonine-protein kinase involved in the SLT2 mitogen-activated (MAP) kinase signaling pathway that regulates cell wall integrity. May also be involved in the mating pheromone and the CWI MAPK pathways. The chain is Serine/threonine-protein kinase KDX1 (KDX1) from Saccharomyces cerevisiae (strain ATCC 204508 / S288c) (Baker's yeast).